A 72-amino-acid polypeptide reads, in one-letter code: Putative D-serine transporter DsdX-like protein (72 aa).

This Escherichia coli O157:H7 protein is Putative D-serine transporter DsdX-like protein (dsdX).